The following is a 239-amino-acid chain: 1-(5-phosphoribosyl)-5-[(5-phosphoribosylamino)methylideneamino] imidazole-4-carboxamide isomerase (239 aa).

D8 functions as the Proton acceptor in the catalytic mechanism. D129 serves as the catalytic Proton donor.

It belongs to the HisA/HisF family.

It is found in the cytoplasm. It carries out the reaction 1-(5-phospho-beta-D-ribosyl)-5-[(5-phospho-beta-D-ribosylamino)methylideneamino]imidazole-4-carboxamide = 5-[(5-phospho-1-deoxy-D-ribulos-1-ylimino)methylamino]-1-(5-phospho-beta-D-ribosyl)imidazole-4-carboxamide. It participates in amino-acid biosynthesis; L-histidine biosynthesis; L-histidine from 5-phospho-alpha-D-ribose 1-diphosphate: step 4/9. This is 1-(5-phosphoribosyl)-5-[(5-phosphoribosylamino)methylideneamino] imidazole-4-carboxamide isomerase from Bacillus cytotoxicus (strain DSM 22905 / CIP 110041 / 391-98 / NVH 391-98).